The primary structure comprises 167 residues: Transcriptional repressor NrdR (167 aa).

A zinc finger spans residues 3-34 (CPFCRNPDSRVVDSRMADDGSAIRRRRQCPEC). One can recognise an ATP-cone domain in the interval 46–136 (LSVIKRSGVG…VYQAFESLED (91 aa)). Residues 148–167 (AQEDAAERPATPRKPEKTSL) are disordered.

The protein belongs to the NrdR family. Zn(2+) is required as a cofactor.

Negatively regulates transcription of bacterial ribonucleotide reductase nrd genes and operons by binding to NrdR-boxes. The protein is Transcriptional repressor NrdR of Pseudarthrobacter chlorophenolicus (strain ATCC 700700 / DSM 12829 / CIP 107037 / JCM 12360 / KCTC 9906 / NCIMB 13794 / A6) (Arthrobacter chlorophenolicus).